Consider the following 111-residue polypeptide: Ig kappa chain V-III region PC 3741/TEPC 111 (111 aa).

Positions 1-23 (DIVLTQSPASLAVSLGQRATISC) are framework-1. C23 and C92 are joined by a disulfide. Residues 24 to 38 (RASESVDSYGNSFMH) are complementarity-determining-1. The framework-2 stretch occupies residues 39–53 (WYQQKPGQPPKLLIY). Positions 54–60 (RASNLES) are complementarity-determining-2. Residues 61 to 92 (GIPARFSGSGSRTDFTLTINPVEADDVATYYC) form a framework-3 region. Residues 93-101 (QQSNEDPYT) form a complementarity-determining-3 region. Positions 102-111 (FGGGTKLEIK) are framework-4.

The polypeptide is Ig kappa chain V-III region PC 3741/TEPC 111 (Mus musculus (Mouse)).